Consider the following 130-residue polypeptide: ATP synthase epsilon chain (130 aa).

It belongs to the ATPase epsilon chain family. As to quaternary structure, F-type ATPases have 2 components, CF(1) - the catalytic core - and CF(0) - the membrane proton channel. CF(1) has five subunits: alpha(3), beta(3), gamma(1), delta(1), epsilon(1). CF(0) has three main subunits: a, b and c.

The protein localises to the cell inner membrane. Its function is as follows. Produces ATP from ADP in the presence of a proton gradient across the membrane. The sequence is that of ATP synthase epsilon chain from Pelagibacter ubique (strain HTCC1062).